The sequence spans 280 residues: 3-phenylpropionate-dihydrodiol/cinnamic acid-dihydrodiol dehydrogenase (280 aa).

Residue Ser-143 participates in substrate binding. The active-site Proton acceptor is Tyr-156.

This sequence belongs to the short-chain dehydrogenases/reductases (SDR) family.

The enzyme catalyses 3-(cis-5,6-dihydroxycyclohexa-1,3-dien-1-yl)propanoate + NAD(+) = 3-(2,3-dihydroxyphenyl)propanoate + NADH + H(+). It catalyses the reaction (2E)-3-(cis-5,6-dihydroxycyclohexa-1,3-dien-1-yl)prop-2-enoate + NAD(+) = (2E)-3-(2,3-dihydroxyphenyl)prop-2-enoate + NADH + H(+). It participates in aromatic compound metabolism; 3-phenylpropanoate degradation. Functionally, converts 3-phenylpropionate-dihydrodiol (PP-dihydrodiol) and cinnamic acid-dihydrodiol (CI-dihydrodiol) into 3-(2,3-dihydroxylphenyl)propanoic acid (DHPP) and 2,3-dihydroxicinnamic acid (DHCI), respectively. The polypeptide is 3-phenylpropionate-dihydrodiol/cinnamic acid-dihydrodiol dehydrogenase (Photorhabdus laumondii subsp. laumondii (strain DSM 15139 / CIP 105565 / TT01) (Photorhabdus luminescens subsp. laumondii)).